A 582-amino-acid polypeptide reads, in one-letter code: ATP-dependent lipid A-core flippase (582 aa).

The next 5 helical transmembrane spans lie at 15–35 (LWPI…ALVI), 68–88 (YVVV…SYCL), 140–160 (GALI…AVML), 161–181 (YTSW…AVLI), and 254–274 (VQII…VPTI). The 284-residue stretch at 27-310 (VVSGIALVIN…LTNVNAQFQK (284 aa)) folds into the ABC transmembrane type-1 domain. An ABC transporter domain is found at 342–578 (LSFKNVTFTY…NGAYKQLHHI (237 aa)). 376–383 (GRSGSGKS) is a binding site for ATP.

The protein belongs to the ABC transporter superfamily. Lipid exporter (TC 3.A.1.106) family. As to quaternary structure, homodimer.

Its subcellular location is the cell inner membrane. It catalyses the reaction ATP + H2O + lipid A-core oligosaccharideSide 1 = ADP + phosphate + lipid A-core oligosaccharideSide 2.. Functionally, involved in lipopolysaccharide (LPS) biosynthesis. Translocates lipid A-core from the inner to the outer leaflet of the inner membrane. Transmembrane domains (TMD) form a pore in the inner membrane and the ATP-binding domain (NBD) is responsible for energy generation. This Pasteurella multocida (strain Pm70) protein is ATP-dependent lipid A-core flippase.